A 447-amino-acid chain; its full sequence is Serine/threonine-protein phosphatase 2A 55 kDa regulatory subunit B gamma isoform (447 aa).

7 WD repeats span residues 22–61 (TEAD…KNAP), 87–128 (EIEE…KRPE), 171–209 (GHTY…RSFN), 220–260 (DLTE…LCDK), 279–317 (EIIS…RPIE), 334–375 (ENDC…DVTL), and 410–446 (DFTK…NSDV).

The protein belongs to the phosphatase 2A regulatory subunit B family. In terms of assembly, PP2A consists of a common heterodimeric core enzyme, composed of a 36 kDa catalytic subunit (subunit C) and a 65 kDa constant regulatory subunit (PR65 or subunit A), that associates with a variety of regulatory subunits. Proteins that associate with the core dimer include three families of regulatory subunits B (the R2/B/PR55/B55, R3/B''/PR72/PR130/PR59 and R5/B'/B56 families), the 48 kDa variable regulatory subunit, viral proteins, and cell signaling molecules. Interacts with IER5. As to expression, highly expressed in brain.

In terms of biological role, the B regulatory subunit might modulate substrate selectivity and catalytic activity, and might also direct the localization of the catalytic enzyme to a particular subcellular compartment. The sequence is that of Serine/threonine-protein phosphatase 2A 55 kDa regulatory subunit B gamma isoform (PPP2R2C) from Oryctolagus cuniculus (Rabbit).